A 528-amino-acid polypeptide reads, in one-letter code: Probable rhamnogalacturonate lyase A (528 aa).

The N-terminal stretch at 1-20 (MLSKATLLLFLPSWARVTYA) is a signal peptide. N-linked (GlcNAc...) asparagine glycosylation is present at N46. C50 and C93 are oxidised to a cystine. N148 carries N-linked (GlcNAc...) asparagine glycosylation. C184 and C193 are joined by a disulfide. N-linked (GlcNAc...) asparagine glycosylation is present at N351.

The protein belongs to the polysaccharide lyase 4 family.

The protein localises to the secreted. The catalysed reaction is Endotype eliminative cleavage of L-alpha-rhamnopyranosyl-(1-&gt;4)-alpha-D-galactopyranosyluronic acid bonds of rhamnogalacturonan I domains in ramified hairy regions of pectin leaving L-rhamnopyranose at the reducing end and 4-deoxy-4,5-unsaturated D-galactopyranosyluronic acid at the non-reducing end.. Functionally, pectinolytic enzymes consist of four classes of enzymes: pectin lyase, polygalacturonase, pectin methylesterase and rhamnogalacturonase. Degrades the rhamnogalacturonan I (RG-I) backbone of pectin. The sequence is that of Probable rhamnogalacturonate lyase A (rglA) from Aspergillus fumigatus (strain CBS 144.89 / FGSC A1163 / CEA10) (Neosartorya fumigata).